Reading from the N-terminus, the 196-residue chain is Thymidine kinase (196 aa).

ATP contacts are provided by residues 9 to 16 and 88 to 91; these read SAMNAGKS and DEAQ. Glu89 functions as the Proton acceptor in the catalytic mechanism. The Zn(2+) site is built by Cys146, Cys148, Cys183, and His186.

This sequence belongs to the thymidine kinase family. Homotetramer.

It localises to the cytoplasm. The catalysed reaction is thymidine + ATP = dTMP + ADP + H(+). The chain is Thymidine kinase from Coxiella burnetii (strain RSA 493 / Nine Mile phase I).